We begin with the raw amino-acid sequence, 375 residues long: Succinyl-diaminopimelate desuccinylase (375 aa).

Zn(2+) is bound at residue His66. Asp68 is a catalytic residue. Asp99 contributes to the Zn(2+) binding site. Glu133 acts as the Proton acceptor in catalysis. Positions 134, 162, and 348 each coordinate Zn(2+).

Belongs to the peptidase M20A family. DapE subfamily. As to quaternary structure, homodimer. It depends on Zn(2+) as a cofactor. The cofactor is Co(2+).

The catalysed reaction is N-succinyl-(2S,6S)-2,6-diaminopimelate + H2O = (2S,6S)-2,6-diaminopimelate + succinate. It functions in the pathway amino-acid biosynthesis; L-lysine biosynthesis via DAP pathway; LL-2,6-diaminopimelate from (S)-tetrahydrodipicolinate (succinylase route): step 3/3. Functionally, catalyzes the hydrolysis of N-succinyl-L,L-diaminopimelic acid (SDAP), forming succinate and LL-2,6-diaminopimelate (DAP), an intermediate involved in the bacterial biosynthesis of lysine and meso-diaminopimelic acid, an essential component of bacterial cell walls. In Janthinobacterium sp. (strain Marseille) (Minibacterium massiliensis), this protein is Succinyl-diaminopimelate desuccinylase.